We begin with the raw amino-acid sequence, 75 residues long: Conotoxin Leo-O3 (75 aa).

A signal peptide spans methionine 1–alanine 22. The propeptide occupies aspartate 23–arginine 42. Disulfide bonds link cysteine 47/cysteine 60, cysteine 54/cysteine 63, and cysteine 59/cysteine 69. Position 69 is a cysteine amide (cysteine 69). Positions glycine 70 to valine 75 are excised as a propeptide.

It belongs to the conotoxin O1 superfamily. Expressed by the venom duct.

The protein resides in the secreted. This is Conotoxin Leo-O3 from Conus leopardus (Leopard cone).